Reading from the N-terminus, the 229-residue chain is Chloride conductance regulatory protein ICln (229 aa).

The protein belongs to the pICln (TC 1.A.47) family. Homooligomer.

Its subcellular location is the cytoplasm. The protein resides in the nucleus. Its function is as follows. May participate in cellular volume control by activation of a swelling-induced chloride conductance pathway. The polypeptide is Chloride conductance regulatory protein ICln (Arabidopsis thaliana (Mouse-ear cress)).